The primary structure comprises 238 residues: Pyridoxine 5'-phosphate synthase (238 aa).

Asparagine 7 serves as a coordination point for 3-amino-2-oxopropyl phosphate. Aspartate 9–histidine 10 contacts 1-deoxy-D-xylulose 5-phosphate. Arginine 18 contributes to the 3-amino-2-oxopropyl phosphate binding site. The Proton acceptor role is filled by histidine 43. The 1-deoxy-D-xylulose 5-phosphate site is built by arginine 45 and histidine 50. The Proton acceptor role is filled by glutamate 70. Threonine 100 is a 1-deoxy-D-xylulose 5-phosphate binding site. Histidine 190 (proton donor) is an active-site residue. Residues glycine 191 and glycine 212–histidine 213 each bind 3-amino-2-oxopropyl phosphate.

It belongs to the PNP synthase family. In terms of assembly, homooctamer; tetramer of dimers.

Its subcellular location is the cytoplasm. The enzyme catalyses 3-amino-2-oxopropyl phosphate + 1-deoxy-D-xylulose 5-phosphate = pyridoxine 5'-phosphate + phosphate + 2 H2O + H(+). The protein operates within cofactor biosynthesis; pyridoxine 5'-phosphate biosynthesis; pyridoxine 5'-phosphate from D-erythrose 4-phosphate: step 5/5. Catalyzes the complicated ring closure reaction between the two acyclic compounds 1-deoxy-D-xylulose-5-phosphate (DXP) and 3-amino-2-oxopropyl phosphate (1-amino-acetone-3-phosphate or AAP) to form pyridoxine 5'-phosphate (PNP) and inorganic phosphate. The protein is Pyridoxine 5'-phosphate synthase of Prochlorococcus marinus (strain MIT 9515).